Reading from the N-terminus, the 972-residue chain is 116 kDa U5 small nuclear ribonucleoprotein component (972 aa).

Methionine 1 carries the N-acetylmethionine modification. The tract at residues 1–54 is disordered; sequence MDTDLYDEFGNYIGPELDSDEDDDELGRETKDLDEMDDDDDDDDIGDHDDDHPG. Composition is skewed to acidic residues over residues 17–26 and 34–48; these read LDSDEDDDEL and DEMD…IGDH. Phosphoserine is present on serine 19. Lysine 64 is covalently cross-linked (Glycyl lysine isopeptide (Lys-Gly) (interchain with G-Cter in SUMO1); alternate). Lysine 64 participates in a covalent cross-link: Glycyl lysine isopeptide (Lys-Gly) (interchain with G-Cter in SUMO2); alternate. Phosphothreonine is present on threonine 86. Residues 127–409 enclose the tr-type G domain; it reads ELIRNVTLCG…GIHLTKEELK (283 aa). GTP-binding positions include 136–143, 204–208, and 258–261; these read GHLHHGKT, DTPGH, and NKID.

This sequence belongs to the TRAFAC class translation factor GTPase superfamily. Classic translation factor GTPase family. EF-G/EF-2 subfamily. Component of the U5 snRNP and the U4/U6-U5 tri-snRNP complex, a building block of the spliceosome. The U4/U6-U5 tri-snRNP complex is composed of the U4, U6 and U5 snRNAs and at least PRPF3, PRPF4, PRPF6, PRPF8, PRPF31, SNRNP200, TXNL4A, SNRNP40, DDX23, CD2BP2, PPIH, SNU13, EFTUD2, SART1 and USP39. Component of the pre-catalytic, catalytic and post-catalytic spliceosome complexes. Component of the minor spliceosome, which splices U12-type introns. Within this complex, interacts with CRIPT. Interacts with ERBB4 and PRPF8. Interacts with PIH1D1. Interacts with RPAP3 and URI1 in a ZNHIT2-dependent manner. Interacts with NRDE2. Interacts with FAM50A. Interacts with UBL5.

Its subcellular location is the nucleus. In terms of biological role, required for pre-mRNA splicing as component of the spliceosome, including pre-catalytic, catalytic and post-catalytic spliceosomal complexes. Component of the U5 snRNP and the U4/U6-U5 tri-snRNP complex, a building block of the spliceosome. As a component of the minor spliceosome, involved in the splicing of U12-type introns in pre-mRNAs. The chain is 116 kDa U5 small nuclear ribonucleoprotein component (EFTUD2) from Pongo abelii (Sumatran orangutan).